Consider the following 504-residue polypeptide: Cytochrome P450 4A2 (504 aa).

Residues 1 to 4 constitute a propeptide that is removed on maturation; sequence MGFS. Glutamate 315 provides a ligand contact to heme. At serine 434 the chain carries Phosphoserine. Cysteine 451 contributes to the heme binding site.

It belongs to the cytochrome P450 family. Heme serves as cofactor.

It localises to the endoplasmic reticulum membrane. It is found in the microsome membrane. The enzyme catalyses an omega-methyl-long-chain fatty acid + reduced [NADPH--hemoprotein reductase] + O2 = an omega-hydroxy-long-chain fatty acid + oxidized [NADPH--hemoprotein reductase] + H2O + H(+). It carries out the reaction dodecanoate + reduced [NADPH--hemoprotein reductase] + O2 = (11R)-hydroxydodecanoate + oxidized [NADPH--hemoprotein reductase] + H2O + H(+). It catalyses the reaction dodecanoate + reduced [NADPH--hemoprotein reductase] + O2 = 12-hydroxydodecanoate + oxidized [NADPH--hemoprotein reductase] + H2O + H(+). The catalysed reaction is tetradecanoate + reduced [NADPH--hemoprotein reductase] + O2 = 14-hydroxytetradecanoate + oxidized [NADPH--hemoprotein reductase] + H2O + H(+). The enzyme catalyses hexadecanoate + reduced [NADPH--hemoprotein reductase] + O2 = 16-hydroxyhexadecanoate + oxidized [NADPH--hemoprotein reductase] + H2O + H(+). It participates in lipid metabolism; fatty acid metabolism. Its function is as follows. A cytochrome P450 monooxygenase that catalyzes omega and omega-1 hydroxylation of saturated fatty acids. Exhibits preferential omega versus omega-1 regioselectivity and (R) versus (S) stereoselectivity for hydroxylation of lauric and myristic acids. Has low activity toward palmitic acid. Mechanistically, uses molecular oxygen inserting one oxygen atom into a substrate, and reducing the second into a water molecule, with two electrons provided by NADPH via cytochrome P450 reductase (CPR; NADPH-ferrihemoprotein reductase). In Rattus norvegicus (Rat), this protein is Cytochrome P450 4A2.